The following is a 313-amino-acid chain: uncharacterized protein (313 aa).

This is an uncharacterized protein from Orgyia pseudotsugata multicapsid polyhedrosis virus (OpMNPV).